We begin with the raw amino-acid sequence, 664 residues long: 1,4-alpha-glucan branching enzyme GlgB 2 (664 aa).

The span at 1–17 (MGGKEMRNCKELKHEKN) shows a compositional bias: basic and acidic residues. The disordered stretch occupies residues 1-31 (MGGKEMRNCKELKHEKNGNVTEKVGKNKGKS). The active-site Nucleophile is Asp342. The active-site Proton donor is the Glu395.

Belongs to the glycosyl hydrolase 13 family. GlgB subfamily. In terms of assembly, monomer.

The catalysed reaction is Transfers a segment of a (1-&gt;4)-alpha-D-glucan chain to a primary hydroxy group in a similar glucan chain.. It functions in the pathway glycan biosynthesis; glycogen biosynthesis. Catalyzes the formation of the alpha-1,6-glucosidic linkages in glycogen by scission of a 1,4-alpha-linked oligosaccharide from growing alpha-1,4-glucan chains and the subsequent attachment of the oligosaccharide to the alpha-1,6 position. The protein is 1,4-alpha-glucan branching enzyme GlgB 2 (glgB2) of Clostridium perfringens (strain 13 / Type A).